We begin with the raw amino-acid sequence, 177 residues long: Isopentenyl-diphosphate Delta-isomerase 1 (177 aa).

Residues His-24 and His-30 each contribute to the Mn(2+) site. Residues Ser-28–Ala-160 enclose the Nudix hydrolase domain. Residue Cys-65 is part of the active site. Position 65 (Cys-65) interacts with Mg(2+). Residue His-67 coordinates Mn(2+). Position 85 (Glu-85) interacts with Mg(2+). Glu-110 and Glu-112 together coordinate Mn(2+). Residue Glu-112 is part of the active site.

It belongs to the IPP isomerase type 1 family. Requires Mg(2+) as cofactor. It depends on Mn(2+) as a cofactor.

The protein resides in the cytoplasm. It carries out the reaction isopentenyl diphosphate = dimethylallyl diphosphate. Its pathway is isoprenoid biosynthesis; dimethylallyl diphosphate biosynthesis; dimethylallyl diphosphate from isopentenyl diphosphate: step 1/1. Catalyzes the 1,3-allylic rearrangement of the homoallylic substrate isopentenyl (IPP) to its highly electrophilic allylic isomer, dimethylallyl diphosphate (DMAPP). This chain is Isopentenyl-diphosphate Delta-isomerase 1, found in Aromatoleum aromaticum (strain DSM 19018 / LMG 30748 / EbN1) (Azoarcus sp. (strain EbN1)).